Consider the following 1240-residue polypeptide: DNA-directed RNA polymerase subunit beta (1240 aa).

The protein belongs to the RNA polymerase beta chain family. As to quaternary structure, the RNAP catalytic core consists of 2 alpha, 1 beta, 1 beta' and 1 omega subunit. When a sigma factor is associated with the core the holoenzyme is formed, which can initiate transcription.

The enzyme catalyses RNA(n) + a ribonucleoside 5'-triphosphate = RNA(n+1) + diphosphate. DNA-dependent RNA polymerase catalyzes the transcription of DNA into RNA using the four ribonucleoside triphosphates as substrates. This is DNA-directed RNA polymerase subunit beta from Phytoplasma australiense.